A 549-amino-acid polypeptide reads, in one-letter code: Cation/acetate symporter ActP (549 aa).

The next 13 helical transmembrane spans lie at 33–53 (WQAI…TYWA), 77–97 (LAIA…ALVF), 103–123 (GLIY…LIAE), 148–168 (ILSA…QMVG), 183–203 (IAVV…GMLA), 206–226 (WVQI…AFMV), 262–282 (ISAL…PHIL), 303–323 (GFMG…IMLV), 355–375 (LFLG…VAGL), 404–424 (VSKI…VLFE), 428–448 (IAFM…PIIL), 464–484 (GGWL…TIWV), and 493–513 (IFPY…GIWF).

Belongs to the sodium:solute symporter (SSF) (TC 2.A.21) family.

The protein resides in the cell inner membrane. Transports acetate. The chain is Cation/acetate symporter ActP from Escherichia coli (strain ATCC 8739 / DSM 1576 / NBRC 3972 / NCIMB 8545 / WDCM 00012 / Crooks).